The primary structure comprises 388 residues: Spermosin (388 aa).

Positions 1 to 22 (MAAINVIFISGAIALFALTGSC) are cleaved as a signal peptide. Over residues 29 to 49 (FTNKPYATQNPYSPPQTNQPT) the composition is skewed to polar residues. Positions 29-98 (FTNKPYATQN…SENSESENSE (70 aa)) are disordered. Pro residues predominate over residues 54-64 (QPGPAPTPAPY). Intrachain disulfides connect cysteine 116-cysteine 251, cysteine 163-cysteine 179, cysteine 265-cysteine 330, cysteine 295-cysteine 310, and cysteine 320-cysteine 349. A Peptidase S1 domain is found at 130–372 (IVGGAEAVPN…NLEWLCCYMP (243 aa)). Residues histidine 178 and aspartate 231 each act as charge relay system in the active site. Serine 324 serves as the catalytic Charge relay system.

It belongs to the peptidase S1 family. As to quaternary structure, heterodimer of a heavy chain and either an L1 light chain or an L2 light chain linked by a disulfide bond. In terms of tissue distribution, detected in sperm, but not in unfertilized eggs (at protein level). Expressed in gonad, but not in hepatopancreas, intestine or branchial basket.

It is found in the secreted. The enzyme catalyses Hydrolyzes arginyl bonds, preferably with Pro in the P2 position.. With respect to regulation, inhibited by peptidyl-argininals with Pro in the P2 position, diisopropyl fluorophosphate, phenylmethanesulfonyl fluoride, leupeptin, antipain, soybean trypsin inhibitor, aprotinin, ovomucoid, valyl-prolyl-arginyl-chloromethane, glycyl-valyl-arginyl-chloromethane, p-aminobenzamidine, benzamidine, zinc chloride and mercuric chloride. In terms of biological role, trypsin-like protease with a narrow substrate specificity. Preferentially hydrolyzes substrates with Pro in the P2 position and Val in the P3 position. Plays a role in fertilization. In Halocynthia roretzi (Sea squirt), this protein is Spermosin.